We begin with the raw amino-acid sequence, 427 residues long: 3-phosphoshikimate 1-carboxyvinyltransferase (427 aa).

K22, S23, and R27 together coordinate 3-phosphoshikimate. Residue K22 participates in phosphoenolpyruvate binding. 2 residues coordinate phosphoenolpyruvate: G96 and R124. Residues S169, S170, Q171, S197, D313, N336, and K340 each coordinate 3-phosphoshikimate. Position 171 (Q171) interacts with phosphoenolpyruvate. D313 functions as the Proton acceptor in the catalytic mechanism. R344, R386, and K411 together coordinate phosphoenolpyruvate.

This sequence belongs to the EPSP synthase family. Monomer.

The protein localises to the cytoplasm. It carries out the reaction 3-phosphoshikimate + phosphoenolpyruvate = 5-O-(1-carboxyvinyl)-3-phosphoshikimate + phosphate. It functions in the pathway metabolic intermediate biosynthesis; chorismate biosynthesis; chorismate from D-erythrose 4-phosphate and phosphoenolpyruvate: step 6/7. Its function is as follows. Catalyzes the transfer of the enolpyruvyl moiety of phosphoenolpyruvate (PEP) to the 5-hydroxyl of shikimate-3-phosphate (S3P) to produce enolpyruvyl shikimate-3-phosphate and inorganic phosphate. In Salmonella dublin (strain CT_02021853), this protein is 3-phosphoshikimate 1-carboxyvinyltransferase.